A 778-amino-acid polypeptide reads, in one-letter code: Kin of IRRE-like protein 3 (778 aa).

The first 21 residues, M1–G21, serve as a signal peptide directing secretion. The Extracellular segment spans residues L22–A535. 5 Ig-like C2-type domains span residues Y48–T142, P147–T243, P249–D330, P335–T415, and P419–K515. C69 and C127 form a disulfide bridge. Residue N167 is glycosylated (N-linked (GlcNAc...) asparagine). Residues C170 and C227 are joined by a disulfide bond. N-linked (GlcNAc...) asparagine glycosylation is present at N253. Residues C271 and C314 are joined by a disulfide bond. Residue N324 is glycosylated (N-linked (GlcNAc...) asparagine). 2 cysteine pairs are disulfide-bonded: C356/C398 and C440/C499. The N-linked (GlcNAc...) asparagine glycan is linked to N498. A helical transmembrane segment spans residues V536 to V556. The Cytoplasmic portion of the chain corresponds to A557 to V778. Residues C727–K736 are compositionally biased toward polar residues. The tract at residues C727–V778 is disordered. Residues K748–Q762 are compositionally biased toward low complexity.

Belongs to the immunoglobulin superfamily. In terms of assembly, homodimer; mediates homophilic interactions to promote cell adhesion. Interacts with NPHS1; forms heterodimers with NPHS1. Interacts with NPHS2/podocin (via the C-terminus). Interacts with CASK. Interacts (via extracellular region) with MAP1B. Interacts (via extracellular region) with MYO16. Interacts (via intracellular region) with ATP1B1. Interacts (via intracellular region) with SHMT2. Interacts (via intracellular region) with UFC1. In terms of processing, undergoes proteolysis by a metalloprotease and gives rise to a soluble form. Expressed in fetal and adult brain. Also expressed in kidney, specifically in podocytes of kidney glomeruli. Also expressed in skeletal muscle.

It localises to the cell membrane. The protein resides in the secreted. Synaptic adhesion molecule required for the formation of target-specific synapses. Required for formation of target-specific synapses at hippocampal mossy fiber synapses. Required for formation of mossy fiber filopodia, the synaptic structures connecting dentate granule and GABA neurons. Probably acts as a homophilic adhesion molecule that promotes trans-cellular interactions and stabilize mossy fiber filipodia contact and subsequent synapse formation. Required for the coalescence of vomeronasal sensory neuron axons. May be involved in the hematopoietic supportive capacity of stroma cells; the secreted extracellular domain is directly responsible for supporting hematopoietic stem cells. The chain is Kin of IRRE-like protein 3 from Homo sapiens (Human).